We begin with the raw amino-acid sequence, 266 residues long: Glutathione S-transferase AN1595 (266 aa).

One can recognise a GST N-terminal domain in the interval 43–123; that stretch reads SFGKLYTYKR…HVTNEDSTTT (81 aa). Residues K93, E107, C108, and N143 each contribute to the glutathione site. K93 lines the substrate pocket. One can recognise a GST C-terminal domain in the interval 128 to 259; the sequence is SSLDFVQIIR…VEEGLPNAPP (132 aa).

It belongs to the GST superfamily.

It participates in secondary metabolite biosynthesis; terpenoid biosynthesis. In terms of biological role, glutathione S-transferase; part of the gene cluster that mediates the biosynthesis of the diterpene ent-pimara-8(14),15-diene (PD). Within the cluster, the HMG-CoA reductase AN1593 functions in the mevalonate pathway, which produces isoprenoid precursors. The geranylgeranyl pyrophosphate (GGPP) synthase AN1592 is needed in the formation of GGPP, the precursor for diterpenes. Lastly, the pimaradiene synthase pbcA performs the 2 cyclization steps that convert GGPP to ent-pimara-8(14),15-diene. The putative roles of the remaining cluster enzymes in ent-pimara-8(14),15-diene biosynthesis is unclear. The cytochrome P450 monooxygenase AN1598, the glutathione S-transferase AN1595, the oxidoreductases AN1596 and AN1597 probably function as decorative enzymes. It is possible that in biological conditions the compound is oxidized to ent-pimara-8(14),15-dien-19-oic acid, which is a bioactive diterpene compound predominant in many plant extracts. The sequence is that of Glutathione S-transferase AN1595 from Emericella nidulans (strain FGSC A4 / ATCC 38163 / CBS 112.46 / NRRL 194 / M139) (Aspergillus nidulans).